A 321-amino-acid polypeptide reads, in one-letter code: Glucokinase (321 aa).

8 to 13 (GDVGGT) is a binding site for ATP.

It belongs to the bacterial glucokinase family.

The protein localises to the cytoplasm. It carries out the reaction D-glucose + ATP = D-glucose 6-phosphate + ADP + H(+). This is Glucokinase from Psychromonas ingrahamii (strain DSM 17664 / CCUG 51855 / 37).